Here is a 154-residue protein sequence, read N- to C-terminus: Endoribonuclease YbeY (154 aa).

Zn(2+)-binding residues include His-114, His-118, and His-124.

The protein belongs to the endoribonuclease YbeY family. Requires Zn(2+) as cofactor.

Its subcellular location is the cytoplasm. Functionally, single strand-specific metallo-endoribonuclease involved in late-stage 70S ribosome quality control and in maturation of the 3' terminus of the 16S rRNA. The protein is Endoribonuclease YbeY of Histophilus somni (strain 129Pt) (Haemophilus somnus).